Reading from the N-terminus, the 405-residue chain is Sarcosine oxidase subunit beta (405 aa).

FAD-binding residues include Gly31, His32, Glu53, Asn61, Met62, Thr66, and Ile68. A Tele-8alpha-FMN histidine modification is found at His173. 4 residues coordinate FAD: Val197, Gly354, Gly357, and Lys359.

Belongs to the SoxB family. In terms of assembly, heterotetramer composed of subunits alpha (SoxA), beta (SoxB), gamma (SoxG) and delta (SoxD). Requires FAD as cofactor. The cofactor is FMN.

It localises to the cytoplasm. It carries out the reaction sarcosine + (6S)-5,6,7,8-tetrahydrofolate + O2 = (6R)-5,10-methylene-5,6,7,8-tetrahydrofolate + glycine + H2O2. The catalysed reaction is sarcosine + O2 + H2O = formaldehyde + glycine + H2O2. Its function is as follows. In the presence of tetrahydrofolate, catalyzes the oxidative demethylation of sarcosine to yield glycine, 5,10-methylenetetrahydrofolate and hydrogen peroxide. In the absence of tetrahydrofolate, catalyzes the oxidative demethylation of sarcosine to yield glycine, formaldehyde and hydrogen peroxide. The sequence is that of Sarcosine oxidase subunit beta (soxB) from Arthrobacter sp.